The chain runs to 272 residues: GPN-loop GTPase 3 (272 aa).

12-17 (GAGKST) contacts GTP. Positions 69–71 (GPN) match the Gly-Pro-Asn (GPN)-loop; involved in dimer interface motif. A GTP-binding site is contributed by 172-175 (SKMD). The tract at residues 253–272 (QYGEDEEPKVPKDMDDGDFD) is disordered.

It belongs to the GPN-loop GTPase family. As to quaternary structure, heterodimers with GPN1 or GPN2. Binds to RNA polymerase II (RNAPII).

Functionally, small GTPase required for proper nuclear import of RNA polymerase II and III (RNAPII and RNAPIII). May act at an RNAP assembly step prior to nuclear import. The protein is GPN-loop GTPase 3 of Cryptococcus neoformans var. neoformans serotype D (strain JEC21 / ATCC MYA-565) (Filobasidiella neoformans).